The chain runs to 151 residues: Probable cGMP 3',5'-cyclic phosphodiesterase subunit delta (151 aa).

Belongs to the PDE6D/unc-119 family. Interacts with Pde6.

The protein localises to the nucleus. Its subcellular location is the cytoplasm. This is Probable cGMP 3',5'-cyclic phosphodiesterase subunit delta from Aedes aegypti (Yellowfever mosquito).